The chain runs to 36 residues: Cecropin-D (36 aa).

Position 36 is a lysine amide (Lys-36).

The protein belongs to the cecropin family.

Its subcellular location is the secreted. In terms of biological role, cecropins have lytic and antibacterial activity against several Gram-positive and Gram-negative bacteria. The chain is Cecropin-D from Antheraea pernyi (Chinese oak silk moth).